The sequence spans 161 residues: Ribosome maturation factor RimP (161 aa).

Belongs to the RimP family.

Its subcellular location is the cytoplasm. Functionally, required for maturation of 30S ribosomal subunits. The polypeptide is Ribosome maturation factor RimP (Janthinobacterium sp. (strain Marseille) (Minibacterium massiliensis)).